The chain runs to 87 residues: RNA-binding protein Hfq (87 aa).

The region spanning 9–68 (DPFLNTLRRERIPVSIYLVNGIKLQGYIESFDQFVILLKNSISQMIYKHAISTVVPNHTN) is the Sm domain. Residues 66 to 87 (HTNNQEHNQSQYNNNNACISKP) form a disordered region.

It belongs to the Hfq family. In terms of assembly, homohexamer.

Functionally, RNA chaperone that binds small regulatory RNA (sRNAs) and mRNAs to facilitate mRNA translational regulation in response to envelope stress, environmental stress and changes in metabolite concentrations. Also binds with high specificity to tRNAs. The protein is RNA-binding protein Hfq of Wigglesworthia glossinidia brevipalpis.